A 364-amino-acid chain; its full sequence is Alanine racemase (364 aa).

Residue Lys-35 is the Proton acceptor; specific for D-alanine of the active site. Lys-35 is modified (N6-(pyridoxal phosphate)lysine). A substrate-binding site is contributed by Arg-131. The Proton acceptor; specific for L-alanine role is filled by Tyr-256. Met-304 contacts substrate.

This sequence belongs to the alanine racemase family. The cofactor is pyridoxal 5'-phosphate.

It carries out the reaction L-alanine = D-alanine. The protein operates within amino-acid biosynthesis; D-alanine biosynthesis; D-alanine from L-alanine: step 1/1. Catalyzes the interconversion of L-alanine and D-alanine. May also act on other amino acids. This is Alanine racemase (alr) from Halorhodospira halophila (strain DSM 244 / SL1) (Ectothiorhodospira halophila (strain DSM 244 / SL1)).